The chain runs to 308 residues: Cytochrome b (308 aa).

4 helical membrane passes run Phe1–Thr21, Trp45–Ile66, Trp81–Leu101, and Phe146–Thr166. Heme b contacts are provided by His51 and His65. His150 and His164 together coordinate heme b. His169 contributes to the a ubiquinone binding site. 3 consecutive transmembrane segments (helical) span residues Met194–Ser214, Leu256–His276, and Leu288–Ser308.

Belongs to the cytochrome b family. The cytochrome bc1 complex contains 11 subunits: 3 respiratory subunits (MT-CYB, CYC1 and UQCRFS1), 2 core proteins (UQCRC1 and UQCRC2) and 6 low-molecular weight proteins (UQCRH/QCR6, UQCRB/QCR7, UQCRQ/QCR8, UQCR10/QCR9, UQCR11/QCR10 and a cleavage product of UQCRFS1). This cytochrome bc1 complex then forms a dimer. Heme b serves as cofactor.

Its subcellular location is the mitochondrion inner membrane. Component of the ubiquinol-cytochrome c reductase complex (complex III or cytochrome b-c1 complex) that is part of the mitochondrial respiratory chain. The b-c1 complex mediates electron transfer from ubiquinol to cytochrome c. Contributes to the generation of a proton gradient across the mitochondrial membrane that is then used for ATP synthesis. This is Cytochrome b (MT-CYB) from Amblyornis macgregoriae (Macgregor's bowerbird).